The following is a 130-amino-acid chain: Small ribosomal subunit protein uS11c (130 aa).

The protein belongs to the universal ribosomal protein uS11 family. In terms of assembly, part of the 30S ribosomal subunit.

It localises to the plastid. It is found in the chloroplast. This is Small ribosomal subunit protein uS11c from Adiantum capillus-veneris (Maidenhair fern).